The sequence spans 571 residues: Proline--tRNA ligase (571 aa).

This sequence belongs to the class-II aminoacyl-tRNA synthetase family. ProS type 1 subfamily. As to quaternary structure, homodimer.

Its subcellular location is the cytoplasm. It catalyses the reaction tRNA(Pro) + L-proline + ATP = L-prolyl-tRNA(Pro) + AMP + diphosphate. In terms of biological role, catalyzes the attachment of proline to tRNA(Pro) in a two-step reaction: proline is first activated by ATP to form Pro-AMP and then transferred to the acceptor end of tRNA(Pro). As ProRS can inadvertently accommodate and process non-cognate amino acids such as alanine and cysteine, to avoid such errors it has two additional distinct editing activities against alanine. One activity is designated as 'pretransfer' editing and involves the tRNA(Pro)-independent hydrolysis of activated Ala-AMP. The other activity is designated 'posttransfer' editing and involves deacylation of mischarged Ala-tRNA(Pro). The misacylated Cys-tRNA(Pro) is not edited by ProRS. The protein is Proline--tRNA ligase of Pseudomonas putida (strain W619).